A 601-amino-acid chain; its full sequence is Putative pentatricopeptide repeat-containing protein At3g25060, mitochondrial (601 aa).

The transit peptide at 1-80 (MVQTKHFCML…KVFDELPQRG (80 aa)) directs the protein to the mitochondrion. 13 PPR repeats span residues 49–79 (GSSISRDLIASCGRIGEISYARKVFDELPQR), 80–114 (GVSVYNSMIVVYSRGKNPDEVLRLYDQMIAEKIQP), 115–149 (DSSTFTMTIKACLSGLVLEKGEAVWCKAVDFGYKN), 150–180 (DVFVCSSVLNLYMKCGKMDEAEVLFGKMAKR), 181–215 (DVICWTTMVTGFAQAGKSLKAVEFYREMQNEGFGR), 216–250 (DRVVMLGLLQASGDLGDTKMGRSVHGYLYRTGLPM), 251–281 (NVVVETSLVDMYAKVGFIEVASRVFSRMMFK), 282–316 (TAVSWGSLISGFAQNGLANKAFEAVVEMQSLGFQP), 317–347 (DLVTLVGVLVACSQVGSLKTGRLVHCYILKR), 351–381 (DRVTATALMDMYSKCGALSSSREIFEHVGRK), 382–416 (DLVCWNTMISCYGIHGNGQEVVSLFLKMTESNIEP), 417–452 (DHATFASLLSALSHSGLVEQGQHWFSVMINKYKIQP), and 453–487 (SEKHYVCLIDLLARAGRVEEALDMINSEKLDNALP). Residues 488 to 563 (IWVALLSGCI…VPGYSAIEVN (76 aa)) form a type E motif region. The interval 564–594 (GELRTFLMEDLSHHEHYHMLQVLRNLKTEIR) is type E(+) motif.

This sequence belongs to the PPR family. PCMP-E subfamily.

It is found in the mitochondrion. The polypeptide is Putative pentatricopeptide repeat-containing protein At3g25060, mitochondrial (PCMP-E96) (Arabidopsis thaliana (Mouse-ear cress)).